Consider the following 616-residue polypeptide: MAEDEPDAKSPKTGGRAPPGGAEAGEPTTLLQRLRGTISKAVQNKVEGILQDVQKFSDNDKLYLYLQLPSGPTTGDKSSEPSTLSNEEYMYAYRWIRNHLEEHTDTCLPKQSVYDAYRKYCESLACCRPLSTANFGKIIREIFPDIKARRLGGRGQSKYCYSGIRRKTLVSMPPLPGLDLKGSESPEMGPEVTPAPRDELVEAACALTCDWAERILKRSFSSIVEVARFLLQQHLISARSAHAHVLKAMGLAEEDEHAPRERSSKPKNGLENPEGGAHKKPERLAQPPKDLEARTGAGPLARGERKKSVVESSAPGANNLQVNALVARLPLLLPRAPRSLIPPIPVSPPILAPRLSSGALKVATLPLSSRAGAPPAAVPIINMILPTVPALPGPGPGPGRAPPGGLTQPRGTENREVGIGGDQGPHDKGVKRTAEVPVSEASGQAPPAKAAKQDIEDTASDAKRKRGRPRKKSGGSGERNSTPLKSAAAMESAQSSRLPWETWGSGGEGNSAGGAERPGPMGEAEKGAVLAQGQGDGTVSKGGRGPGSQHTKEAEDKIPLVPSKVSVIKGSRSQKEAFPLAKGEVDTAPQGNKDLKEHVLQSSLSQEHKDPKATPP.

The disordered stretch occupies residues 1–29 (MAEDEPDAKSPKTGGRAPPGGAEAGEPTT). A2 carries the post-translational modification N-acetylalanine. At S10 the chain carries Phosphoserine. Low complexity predominate over residues 13-29 (TGGRAPPGGAEAGEPTT). The segment at 25–90 (GEPTTLLQRL…PSTLSNEEYM (66 aa)) is N-terminal domain. Residues 62-66 (LYLYL) form a leucine-rich region; critical for dimer formation and for interaction with RFXAP region. A DNA-binding region (RFX-type winged-helix) is located at residues 92 to 168 (AYRWIRNHLE…YCYSGIRRKT (77 aa)). The PxLPxI/L motif; mediates interaction with RFXANK signature appears at 173–178 (PPLPGL). S185 bears the Phosphoserine mark. Disordered regions lie at residues 252 to 314 (AEED…ESSA) and 391 to 616 (LPGP…ATPP). A compositionally biased stretch (basic and acidic residues) spans 276 to 293 (GAHKKPERLAQPPKDLEA). Over residues 391–401 (LPGPGPGPGRA) the composition is skewed to pro residues. Residues 424-434 (GPHDKGVKRTA) are compositionally biased toward basic and acidic residues. Over residues 463–473 (KRKRGRPRKKS) the composition is skewed to basic residues. The span at 534–546 (QGDGTVSKGGRGP) shows a compositional bias: gly residues. Basic and acidic residues predominate over residues 606–616 (QEHKDPKATPP).

Belongs to the RFX family. In terms of assembly, homodimer. The RFX heterotetrameric complex consists of 2 molecules of RFX5 and one each of RFXAP and RFX-B/RFXANK; with each subunit representing a separate complementation group. Interacts (via PxLPxI/L motif) with RFXANK (via ankyrin repeats); the interaction is direct. RFX forms cooperative DNA binding complexes with X2BP and CBF/NF-Y. RFX associates with CIITA to form an active transcriptional complex. Post-translationally, phosphorylated. In terms of tissue distribution, ubiquitous.

It is found in the nucleus. Functionally, activates transcription from class II MHC promoters. Recognizes X-boxes. Mediates cooperative binding between RFX and NF-Y. RFX binds the X1 box of MHC-II promoters. This chain is DNA-binding protein RFX5 (RFX5), found in Homo sapiens (Human).